An 845-amino-acid chain; its full sequence is Tyrosine-protein phosphatase corkscrew (845 aa).

SH2 domains are found at residues 6–101 (WFHP…KQPL) and 111–205 (WFHG…RQPF). Residues 227-645 (FWEEFESLQQ…KFVYYAVQHY (419 aa)) enclose the Tyrosine-protein phosphatase domain. Positions 289–444 (IRLPTDGDLY…REREREMFKT (156 aa)) are PTPase insert (Cys/Ser-rich). Residues 362-402 (SKHKRSESSASSSPSSGSGSGPGSSGTSGVSSVNGPGTPTN) are disordered. Composition is skewed to low complexity over residues 369–378 (SSASSSPSSG) and 388–400 (TSGV…PGTP). At Ser-419 the chain carries Phosphoserine. Substrate contacts are provided by residues Asp-545, 583-589 (CSAGIGR), and Gln-630. The active-site Phosphocysteine intermediate is the Cys-583. The interval 793 to 824 (DSLKQQQQREEQAPAGAGKMQQPAPPLRPRPG) is disordered.

The protein belongs to the protein-tyrosine phosphatase family. Non-receptor class subfamily. In terms of assembly, interacts with drpr isoform A. As to expression, expressed uniformly throughout all tissues during embryogenesis.

The protein resides in the cytoplasm. It catalyses the reaction O-phospho-L-tyrosyl-[protein] + H2O = L-tyrosyl-[protein] + phosphate. Functionally, required in all receptor tyrosine kinase signaling pathways. Functions downstream of the receptor tyrosine kinase torso, acting in concert with D-Raf via tailless. Also functions downstream of Egfr (epidermal growth factor receptor) and btl (fibroblast growth factor receptor). The SH2 domain suggests that csw effects its role by mediating heteromeric protein interactions. Maternally required for normal determination of cell fates at the termini of the embryo. Required for cell fate specification of the ventral ectoderm, in the developing embryonic CNS and for embryonic tracheal cell migration. Functions during imaginal development for proper formation of adult structures such as eyes, aristae, L5 wing vein and the tarsal claw. Dephosphorylates drpr isoform A which is required for the inhibition by drpr isoform A of glial cell engulfment of axonal debris produced following axonal injury. This chain is Tyrosine-protein phosphatase corkscrew (csw), found in Drosophila melanogaster (Fruit fly).